Consider the following 619-residue polypeptide: 1-deoxy-D-xylulose-5-phosphate synthase (619 aa).

Residues His74 and 115–117 each bind thiamine diphosphate; that span reads GHS. Asp146 is a Mg(2+) binding site. Residues 147-148, Asn175, Tyr285, and Glu365 each bind thiamine diphosphate; that span reads GA. Asn175 contributes to the Mg(2+) binding site.

The protein belongs to the transketolase family. DXPS subfamily. As to quaternary structure, homodimer. Mg(2+) is required as a cofactor. Requires thiamine diphosphate as cofactor.

The enzyme catalyses D-glyceraldehyde 3-phosphate + pyruvate + H(+) = 1-deoxy-D-xylulose 5-phosphate + CO2. The protein operates within metabolic intermediate biosynthesis; 1-deoxy-D-xylulose 5-phosphate biosynthesis; 1-deoxy-D-xylulose 5-phosphate from D-glyceraldehyde 3-phosphate and pyruvate: step 1/1. In terms of biological role, catalyzes the acyloin condensation reaction between C atoms 2 and 3 of pyruvate and glyceraldehyde 3-phosphate to yield 1-deoxy-D-xylulose-5-phosphate (DXP). The polypeptide is 1-deoxy-D-xylulose-5-phosphate synthase (Clostridium acetobutylicum (strain ATCC 824 / DSM 792 / JCM 1419 / IAM 19013 / LMG 5710 / NBRC 13948 / NRRL B-527 / VKM B-1787 / 2291 / W)).